The primary structure comprises 123 residues: Small ribosomal subunit protein uS12 (123 aa).

A 3-methylthioaspartic acid modification is found at Asp89.

It belongs to the universal ribosomal protein uS12 family. In terms of assembly, part of the 30S ribosomal subunit. Contacts proteins S8 and S17. May interact with IF1 in the 30S initiation complex.

Its function is as follows. With S4 and S5 plays an important role in translational accuracy. Interacts with and stabilizes bases of the 16S rRNA that are involved in tRNA selection in the A site and with the mRNA backbone. Located at the interface of the 30S and 50S subunits, it traverses the body of the 30S subunit contacting proteins on the other side and probably holding the rRNA structure together. The combined cluster of proteins S8, S12 and S17 appears to hold together the shoulder and platform of the 30S subunit. This is Small ribosomal subunit protein uS12 from Anaeromyxobacter sp. (strain Fw109-5).